The sequence spans 123 residues: Small ribosomal subunit protein uS12 (123 aa).

The interval 1–32 (MPTINQLVRHGRKRSVKKTNTPALKASPQKRG) is disordered. Asp89 carries the post-translational modification 3-methylthioaspartic acid.

The protein belongs to the universal ribosomal protein uS12 family. Part of the 30S ribosomal subunit. Contacts proteins S8 and S17. May interact with IF1 in the 30S initiation complex.

With S4 and S5 plays an important role in translational accuracy. In terms of biological role, interacts with and stabilizes bases of the 16S rRNA that are involved in tRNA selection in the A site and with the mRNA backbone. Located at the interface of the 30S and 50S subunits, it traverses the body of the 30S subunit contacting proteins on the other side and probably holding the rRNA structure together. The combined cluster of proteins S8, S12 and S17 appears to hold together the shoulder and platform of the 30S subunit. In Desulfatibacillum aliphaticivorans, this protein is Small ribosomal subunit protein uS12.